Consider the following 1033-residue polypeptide: Tyrosine-protein kinase-like otk (1033 aa).

Positions 1–22 (MTARMISIYGLVLASMMASVWA) are cleaved as a signal peptide. The Extracellular segment spans residues 23–581 (SSSRFQRLPQ…GGDGFLVTRA (559 aa)). Ig-like C2-type domains are found at residues 25-108 (SRFQ…REAS), 109-199 (PPAK…RVMS), 251-365 (PEDL…LPIS), 368-463 (PGVL…VAIN), and 468-558 (PKFS…VQLV). The N-linked (GlcNAc...) asparagine glycan is linked to Asn-39. 4 disulfide bridges follow: Cys-46–Cys-95, Cys-137–Cys-188, Cys-276–Cys-354, and Cys-399–Cys-447. N-linked (GlcNAc...) asparagine glycosylation is found at Asn-336, Asn-417, Asn-429, Asn-444, Asn-457, Asn-512, and Asn-524. Cys-490 and Cys-542 form a disulfide bridge. The helical transmembrane segment at 582–602 (VLITMTVALAYIVLVVGLMLW) threads the bilayer. At 603–1033 (CRYRRQARKA…LSKAMQSVEK (431 aa)) the chain is on the cytoplasmic side. Disordered stretches follow at residues 617-679 (LSTK…KKSA) and 718-760 (SPTD…KTSM). A compositionally biased stretch (polar residues) spans 655–673 (KSSGDAQKSDDTACSQQSR). The residue at position 678 (Ser-678) is a Phosphoserine. A Protein kinase; inactive domain is found at 692–1028 (LSELIQIGRG…QLGAALSKAM (337 aa)). Residues 720–731 (TDKDADTEKQHS) are compositionally biased toward basic and acidic residues.

The protein belongs to the protein kinase superfamily. Tyr protein kinase family. Insulin receptor subfamily. In terms of assembly, interacts with plexA; component of a receptor complex that mediates the repulsive signaling in response to Semaphorin ligands.

Its subcellular location is the cell membrane. Its function is as follows. Acts as a calcium-dependent, homophilic cell adhesion molecule that regulates neural recognition during the development of the nervous system. Component of the repulsive Plexin signaling response to regulate motor axon guidance at the embryonic stage. Also component of a receptor complex that is required in the adult visual system to innervate the lamina layer; specific targeting of R1-R6 axons. The protein is Tyrosine-protein kinase-like otk of Drosophila erecta (Fruit fly).